The primary structure comprises 394 residues: NAD(P)H-quinone oxidoreductase subunit H (394 aa).

The protein belongs to the complex I 49 kDa subunit family. As to quaternary structure, NDH-1 can be composed of about 15 different subunits; different subcomplexes with different compositions have been identified which probably have different functions.

It is found in the cellular thylakoid membrane. The enzyme catalyses a plastoquinone + NADH + (n+1) H(+)(in) = a plastoquinol + NAD(+) + n H(+)(out). It catalyses the reaction a plastoquinone + NADPH + (n+1) H(+)(in) = a plastoquinol + NADP(+) + n H(+)(out). NDH-1 shuttles electrons from an unknown electron donor, via FMN and iron-sulfur (Fe-S) centers, to quinones in the respiratory and/or the photosynthetic chain. The immediate electron acceptor for the enzyme in this species is believed to be plastoquinone. Couples the redox reaction to proton translocation, and thus conserves the redox energy in a proton gradient. Cyanobacterial NDH-1 also plays a role in inorganic carbon-concentration. The sequence is that of NAD(P)H-quinone oxidoreductase subunit H from Picosynechococcus sp. (strain ATCC 27264 / PCC 7002 / PR-6) (Agmenellum quadruplicatum).